The chain runs to 104 residues: Nucleoid-associated protein Moth_0028 (104 aa).

It belongs to the YbaB/EbfC family. As to quaternary structure, homodimer.

It is found in the cytoplasm. The protein resides in the nucleoid. Functionally, binds to DNA and alters its conformation. May be involved in regulation of gene expression, nucleoid organization and DNA protection. The sequence is that of Nucleoid-associated protein Moth_0028 from Moorella thermoacetica (strain ATCC 39073 / JCM 9320).